Consider the following 308-residue polypeptide: uncharacterized protein (308 aa).

Positions 5 to 236 (LELQQLKKTY…LKSETFILDL (232 aa)) constitute an ABC transporter domain. Residue 38–45 (GPNGAGKS) coordinates ATP.

The protein belongs to the ABC transporter superfamily.

This is an uncharacterized protein from Escherichia coli (strain K12).